Reading from the N-terminus, the 423-residue chain is Putative UPF0496 protein 5 (423 aa).

A compositionally biased stretch (basic residues) spans 1-14 (MGNRHGIMRPRRLA). Residues 1–37 (MGNRHGIMRPRRLASGRSAAEEEEDGEGEPGSYEAAC) are disordered. The next 2 helical transmembrane spans lie at 224–244 (IVFL…AAIA) and 247–267 (PVAA…GKWM).

Belongs to the UPF0496 family.

The protein localises to the membrane. The chain is Putative UPF0496 protein 5 from Oryza sativa subsp. japonica (Rice).